A 342-amino-acid chain; its full sequence is Ferredoxin--NADP reductase (342 aa).

FAD-binding residues include Cys17, Asp36, Gln44, Tyr49, Ile89, Phe124, Asp289, and Thr330.

This sequence belongs to the ferredoxin--NADP reductase type 2 family. As to quaternary structure, homodimer. FAD is required as a cofactor.

It carries out the reaction 2 reduced [2Fe-2S]-[ferredoxin] + NADP(+) + H(+) = 2 oxidized [2Fe-2S]-[ferredoxin] + NADPH. The protein is Ferredoxin--NADP reductase of Rhodopseudomonas palustris (strain BisA53).